A 256-amino-acid chain; its full sequence is MRNSPVSPGPGYAPSRGAARTRKRGVARWLAYAGGVFAGAWLATQLYYVAQIAAWSVIDPGSSAFMRADAWRLSNAQPAVPIRHRWVPYDKISRNLKRAVIASEDADFANNSGYEVDAILQAWEKNRARGRIVSGGSTITQQLARNLFLSGERSYIRKGQELIITWMLETLLDKERIFEIYLNSVEFGRGVYGAEAAAQYYYRIPASRLSAWQSARLAVMLPNPKYFDAHRSSPYLAQRASVIARRMGAAELPASQ.

The helical transmembrane segment at 26–48 (VARWLAYAGGVFAGAWLATQLYY) threads the bilayer.

Belongs to the glycosyltransferase 51 family.

The protein resides in the cell inner membrane. The enzyme catalyses [GlcNAc-(1-&gt;4)-Mur2Ac(oyl-L-Ala-gamma-D-Glu-L-Lys-D-Ala-D-Ala)](n)-di-trans,octa-cis-undecaprenyl diphosphate + beta-D-GlcNAc-(1-&gt;4)-Mur2Ac(oyl-L-Ala-gamma-D-Glu-L-Lys-D-Ala-D-Ala)-di-trans,octa-cis-undecaprenyl diphosphate = [GlcNAc-(1-&gt;4)-Mur2Ac(oyl-L-Ala-gamma-D-Glu-L-Lys-D-Ala-D-Ala)](n+1)-di-trans,octa-cis-undecaprenyl diphosphate + di-trans,octa-cis-undecaprenyl diphosphate + H(+). It functions in the pathway cell wall biogenesis; peptidoglycan biosynthesis. Functionally, peptidoglycan polymerase that catalyzes glycan chain elongation from lipid-linked precursors. The polypeptide is Biosynthetic peptidoglycan transglycosylase (Burkholderia thailandensis (strain ATCC 700388 / DSM 13276 / CCUG 48851 / CIP 106301 / E264)).